The primary structure comprises 166 residues: MKVVVIQGPNLNMLGIREQRLYGPMKLEQIHQNMKTFADQNGMEVEFFQSNLEGEIVDKIQECLGDADGIIINPAAYSHTSIAIRDAISAVSLPTLEVHITNIHAREEFRRHSLTAEVAAGVIAGFGPFGYHMAMIAMHQILSELGALKEAQAKAQAQAQEGAKES.

The active-site Proton acceptor is Y22. Substrate-binding residues include N73, H79, and D86. The active-site Proton donor is the H99. Substrate-binding positions include 100 to 101 (IT) and R110.

The protein belongs to the type-II 3-dehydroquinase family. As to quaternary structure, homododecamer.

The enzyme catalyses 3-dehydroquinate = 3-dehydroshikimate + H2O. It functions in the pathway metabolic intermediate biosynthesis; chorismate biosynthesis; chorismate from D-erythrose 4-phosphate and phosphoenolpyruvate: step 3/7. Its function is as follows. Catalyzes a trans-dehydration via an enolate intermediate. The polypeptide is 3-dehydroquinate dehydratase (Wolinella succinogenes (strain ATCC 29543 / DSM 1740 / CCUG 13145 / JCM 31913 / LMG 7466 / NCTC 11488 / FDC 602W) (Vibrio succinogenes)).